We begin with the raw amino-acid sequence, 115 residues long: MSANNERLRRARKVRMKIRELGTDRLCVHRTPRHMYAQVTTADGSKVLATASTLDKELRQGATGNVDAAKKVGQLIAERAKAAGIEKVAFDRSGYRYHGRVQALADAAREAGLQF.

It belongs to the universal ribosomal protein uL18 family. In terms of assembly, part of the 50S ribosomal subunit; part of the 5S rRNA/L5/L18/L25 subcomplex. Contacts the 5S and 23S rRNAs.

In terms of biological role, this is one of the proteins that bind and probably mediate the attachment of the 5S RNA into the large ribosomal subunit, where it forms part of the central protuberance. The protein is Large ribosomal subunit protein uL18 of Marinobacter nauticus (strain ATCC 700491 / DSM 11845 / VT8) (Marinobacter aquaeolei).